The sequence spans 350 residues: MLHPATQQSPFMVDLHDQVHQGPVPLSYTVTTVTTQGFPLPASQHIPGCSAQQLPACSVMFSGQHYPLCCLPPPLIQACTMQQLPVPYHTYPHLISSDHYILHPPPPAPPPQPTHMAPLGQFVSLQTQHPRMPLQRLDNEMDLRGDQHPLGSFTYSTSATGPTLSPSVPLHYLPHDPLHQELSFGVPYSHMMPRRLSTQRYRLQQPLPPPPPPPPPSYYPSFLPYFLSMLPMSPTTVGPTISLDLDVDDVEMENYEALLNLAERLGDAKPRGLTKADIEQLPSYRFNPDSHQSEQTLCVVCFSDFEVRQLLRVLPCNHEFHAKCVDKWLKANRTCPICRADASEVPREAE.

An RING-type; atypical zinc finger spans residues 298-339 (CVVCFSDFEVRQLLRVLPCNHEFHAKCVDKWLKANRTCPICR).

In Rattus norvegicus (Rat), this protein is RING finger protein 44 (Rnf44).